A 307-amino-acid polypeptide reads, in one-letter code: Malate dehydrogenase (307 aa).

NAD(+) contacts are provided by residues 8-13 and D32; that span reads GAGNVG. Substrate contacts are provided by R81 and R87. NAD(+) is bound by residues N94 and 117–119; that span reads VSN. The substrate site is built by N119 and R150. The active-site Proton acceptor is the H174.

This sequence belongs to the LDH/MDH superfamily. MDH type 3 family.

The enzyme catalyses (S)-malate + NAD(+) = oxaloacetate + NADH + H(+). In terms of biological role, catalyzes the reversible oxidation of malate to oxaloacetate. The protein is Malate dehydrogenase of Dehalococcoides mccartyi (strain ATCC BAA-2266 / KCTC 15142 / 195) (Dehalococcoides ethenogenes (strain 195)).